We begin with the raw amino-acid sequence, 62 residues long: Cuticle protein 6.4 (62 aa).

In terms of biological role, component of the cuticle of migratory locust which contains more than 100 different structural proteins. The protein is Cuticle protein 6.4 of Locusta migratoria (Migratory locust).